The following is a 689-amino-acid chain: Protein CFAP20DC (689 aa).

3 disordered regions span residues 241–263 (LKST…NRIE), 333–423 (SKES…GPSE), and 584–659 (ISTS…DLSV). Composition is skewed to polar residues over residues 251 to 260 (TPSGSSSGNN) and 343 to 359 (EESQ…SSRP). Residues 394–405 (SEDDFYGGDSSE) are compositionally biased toward acidic residues. Over residues 409-421 (HSIQGSRGPTTGP) the composition is skewed to polar residues. Positions 584-593 (ISTSSDDTTT) are enriched in low complexity.

The protein is Protein CFAP20DC of Homo sapiens (Human).